Reading from the N-terminus, the 238-residue chain is Proteasome subunit beta type-6 (238 aa).

At A2 the chain carries N-acetylalanine. The propeptide at 2-33 (AAALAVRRAGSAPAFGPEALTPDWENREVSTG) is removed in mature form. T34 serves as the catalytic Nucleophile. The residue at position 68 (T68) is a Phosphothreonine.

The protein belongs to the peptidase T1B family. The 26S proteasome consists of a 20S proteasome core and two 19S regulatory subunits. The 20S proteasome core is a barrel-shaped complex made of 28 subunits that are arranged in four stacked rings. The two outer rings are each formed by seven alpha subunits, and the two inner rings are formed by seven beta subunits. The proteolytic activity is exerted by three beta-subunits PSMB5, PSMB6 and PSMB7.

It localises to the cytoplasm. The protein resides in the nucleus. The catalysed reaction is Cleavage of peptide bonds with very broad specificity.. Component of the 20S core proteasome complex involved in the proteolytic degradation of most intracellular proteins. This complex plays numerous essential roles within the cell by associating with different regulatory particles. Associated with two 19S regulatory particles, forms the 26S proteasome and thus participates in the ATP-dependent degradation of ubiquitinated proteins. The 26S proteasome plays a key role in the maintenance of protein homeostasis by removing misfolded or damaged proteins that could impair cellular functions, and by removing proteins whose functions are no longer required. Associated with the PA200 or PA28, the 20S proteasome mediates ubiquitin-independent protein degradation. This type of proteolysis is required in several pathways including spermatogenesis (20S-PA200 complex) or generation of a subset of MHC class I-presented antigenic peptides (20S-PA28 complex). Within the 20S core complex, PSMB6 displays a peptidylglutamyl-hydrolyzing activity also termed postacidic or caspase-like activity, meaning that the peptides bond hydrolysis occurs directly after acidic residues. This chain is Proteasome subunit beta type-6 (Psmb6), found in Mus musculus (Mouse).